A 216-amino-acid polypeptide reads, in one-letter code: Large ribosomal subunit protein uL24m (216 aa).

A mitochondrion-targeting transit peptide spans 1-9; sequence MRLSALLAL. At serine 24 the chain carries Phosphoserine. Positions 56 to 89 constitute a KOW domain; sequence LFCGDRVEILEGKDAGKQGKVVQVIRQRNWVVVE.

The protein belongs to the universal ribosomal protein uL24 family. In terms of assembly, component of the mitochondrial ribosome large subunit (39S) which comprises a 16S rRNA and about 50 distinct proteins.

It localises to the mitochondrion. This is Large ribosomal subunit protein uL24m (MRPL24) from Bos taurus (Bovine).